A 454-amino-acid polypeptide reads, in one-letter code: tRNA modification GTPase MnmE (454 aa).

(6S)-5-formyl-5,6,7,8-tetrahydrofolate is bound by residues R23, E80, and K120. The 162-residue stretch at 216 to 377 (GMKVVIAGRP…LRNHLKQSMG (162 aa)) folds into the TrmE-type G domain. N226 is a binding site for K(+). Residues 226–231 (NAGKSS), 245–251 (TDIAGTT), 270–273 (DTAG), 335–338 (NKAD), and 358–360 (SAR) contribute to the GTP site. Residue S230 coordinates Mg(2+). Residues T245, I247, and T250 each coordinate K(+). A Mg(2+)-binding site is contributed by T251. K454 serves as a coordination point for (6S)-5-formyl-5,6,7,8-tetrahydrofolate.

Belongs to the TRAFAC class TrmE-Era-EngA-EngB-Septin-like GTPase superfamily. TrmE GTPase family. As to quaternary structure, homodimer. Heterotetramer of two MnmE and two MnmG subunits. It depends on K(+) as a cofactor.

It localises to the cytoplasm. Functionally, exhibits a very high intrinsic GTPase hydrolysis rate. Involved in the addition of a carboxymethylaminomethyl (cmnm) group at the wobble position (U34) of certain tRNAs, forming tRNA-cmnm(5)s(2)U34. The chain is tRNA modification GTPase MnmE from Yersinia enterocolitica serotype O:8 / biotype 1B (strain NCTC 13174 / 8081).